Reading from the N-terminus, the 279-residue chain is Zinc-finger homeodomain protein 1 (279 aa).

Residues 1-13 are compositionally biased toward acidic residues; it reads MDFDDHDDGDEEM. Residues 1-47 form a disordered region; that stretch reads MDFDDHDDGDEEMPPMPVSSSYETPPQHGLAGGGMAPKPPGEIGSHV. The ZF-HD dimerization-type; degenerate zinc finger occupies 57 to 106; sequence YRECLKNHAVGIGGHAVDGCGEFMAAGEEGTIDALRCAACNCHRNFHRKE. The segment at 157 to 191 is disordered; sequence AAAAAAGGHPQRPLALPSTSHSGRDDGDDLSGMVG. Residues 215-278 constitute a DNA-binding region (homeobox); that stretch reads KKRFRTKFTQ…NNKHTLGKKL (64 aa).

As to quaternary structure, homo- and heterodimer with other ZFHD proteins.

The protein resides in the nucleus. Functionally, putative transcription factor. The chain is Zinc-finger homeodomain protein 1 (ZHD1) from Oryza sativa subsp. indica (Rice).